The following is a 97-amino-acid chain: MANIKSALKRIEIAERNRLQNKSYKSAIKTLMKKTFQSVEAYASDPNPEKLDTINTSMAAAFSKIDKAVKCKVIHKNNAARKKARLAKALQSALPAA.

This sequence belongs to the bacterial ribosomal protein bS20 family.

In terms of biological role, binds directly to 16S ribosomal RNA. In Synechocystis sp. (strain ATCC 27184 / PCC 6803 / Kazusa), this protein is Small ribosomal subunit protein bS20.